The primary structure comprises 599 residues: Pentatricopeptide repeat-containing protein At3g62540, mitochondrial (599 aa).

Residues 1 to 99 (MAAAPWLYLS…RGFSSGSSNV (99 aa)) constitute a mitochondrion transit peptide. PPR repeat units lie at residues 194-228 (ASRTYNSMMSILAKTRQFETMVSVLEEMGTKGLLT), 230-262 (ETFTIAMKAFAAAKERKKAVGIFELMKKYKFKI), 263-293 (GVETINCLLDSLGRAKLGKEAQVLFDKLKER), 297-331 (NMMTYTVLLNGWCRVRNLIEAARIWNDMIDHGLKP), 332-366 (DIVAHNVMLEGLLRSMKKSDAIKLFHVMKSKGPCP), 367-401 (NVRSYTIMIRDFCKQSSMETAIEYFDDMVDSGLQP), 402-436 (DAAVYTCLITGFGTQKKLDTVYELLKEMQEKGHPP), 437-471 (DGKTYNALIKLMANQKMPEHGTRIYNKMIQNEIEP), 472-506 (SIHTFNMIMKSYFVARNYEMGRAVWDEMIKKGICP), and 507-541 (DDNSYTVLIRGLISEGKSREACRYLEEMLDKGMKT).

It belongs to the PPR family. P subfamily.

Its subcellular location is the mitochondrion. This is Pentatricopeptide repeat-containing protein At3g62540, mitochondrial from Arabidopsis thaliana (Mouse-ear cress).